Consider the following 246-residue polypeptide: 1-(5-phosphoribosyl)-5-[(5-phosphoribosylamino)methylideneamino] imidazole-4-carboxamide isomerase (246 aa).

Residue Asp-10 is the Proton acceptor of the active site.

The protein belongs to the HisA/HisF family.

Its subcellular location is the cytoplasm. It catalyses the reaction 1-(5-phospho-beta-D-ribosyl)-5-[(5-phospho-beta-D-ribosylamino)methylideneamino]imidazole-4-carboxamide = 5-[(5-phospho-1-deoxy-D-ribulos-1-ylimino)methylamino]-1-(5-phospho-beta-D-ribosyl)imidazole-4-carboxamide. It participates in amino-acid biosynthesis; L-histidine biosynthesis; L-histidine from 5-phospho-alpha-D-ribose 1-diphosphate: step 4/9. The protein is 1-(5-phosphoribosyl)-5-[(5-phosphoribosylamino)methylideneamino] imidazole-4-carboxamide isomerase of Corynebacterium efficiens (strain DSM 44549 / YS-314 / AJ 12310 / JCM 11189 / NBRC 100395).